An 82-amino-acid polypeptide reads, in one-letter code: Probable 26S proteasome complex subunit dss-1 (82 aa).

The interval 56-82 (NWDDETHESEFSKQLKEELRKSGHQVA) is disordered. Residues 63-76 (ESEFSKQLKEELRK) show a composition bias toward basic and acidic residues.

It belongs to the DSS1/SEM1 family. In terms of assembly, part of the 26S proteasome. Expressed in intestinal epithelium and head neurons.

The protein localises to the nucleus. It is found in the cytoplasm. Functionally, subunit of the 26S proteasome which plays a role in ubiquitin-dependent proteolysis. Has an essential role in oogenesis and larval growth. Required for intestinal function and default lifespan. This Caenorhabditis elegans protein is Probable 26S proteasome complex subunit dss-1 (dss-1).